Here is a 212-residue protein sequence, read N- to C-terminus: MIKSKFIVIEGLEGAGKTNACICIKNLLKKNSIKNVLLVRQPGSTPIAEDIRRLIKKKFNDDNLIKETELLLMYAARIQLVEKKIKPALKNGIWVISDRHDLSSLAYQGGGLGIPKKIIYQLQSLFLNNFIPDLTIYLDVSPEIGLARALKRNPLDLIESRSLFFFKKTRRCYLEKSKLDKKTIIINANLNIKKVTQNITKKMLNWLNKQVI.

11-18 (GLEGAGKT) serves as a coordination point for ATP.

The protein belongs to the thymidylate kinase family.

The catalysed reaction is dTMP + ATP = dTDP + ADP. Phosphorylation of dTMP to form dTDP in both de novo and salvage pathways of dTTP synthesis. The polypeptide is Thymidylate kinase (tmk) (Buchnera aphidicola subsp. Acyrthosiphon pisum (strain APS) (Acyrthosiphon pisum symbiotic bacterium)).